Consider the following 487-residue polypeptide: MKPGSLTLRLSLLFVVAVAAVLIIVGVAFNELSRHHFRALDAQALGEKLEAITQIAKESGANPELLKARWHTLLGAHPDLSAVFLKTDGTPFFAEPPQSAVPSLAQATQRDGVWEWEKEGRMFRALTASVSLPTASPPLTAWLVLDVTTHMHFFAMLERWFWGVLLASTVLSAALGWLVAKNGLRPVARVTQTAASMSAGSLKERIPLEPVPDELRALITAFNSMLGRLDDSFMRLSNFSADIAHELRTPISNLRTHTEVILAKKRAPEVYEENLSSNLEELNRLSGIIDGMLFLAKSDNGLIVPEAVELDLRTVISKLFGYYEFLAEDKGIQLQASGNASIFADSVMIDRVVSNLLSNALRYTSSGETIKVSIHDHGGRVELRLENPGPEIVPQHLDRIFDRFYRVDPARREGRECGAGASDCPVLDASAWRHYLVYIPRGPNDLHPHLHAIACPTNLTCRPDSLGTAKPGHTRLGEHETGCHCAG.

The Periplasmic portion of the chain corresponds to 1–9; that stretch reads MKPGSLTLR. A helical transmembrane segment spans residues 10-30; it reads LSLLFVVAVAAVLIIVGVAFN. Residues 31-136 lie on the Cytoplasmic side of the membrane; it reads ELSRHHFRAL…TASVSLPTAS (106 aa). The helical transmembrane segment at 137–157 threads the bilayer; that stretch reads PPLTAWLVLDVTTHMHFFAML. Topologically, residues 158–159 are periplasmic; the sequence is ER. Residues 160-180 form a helical membrane-spanning segment; that stretch reads WFWGVLLASTVLSAALGWLVA. Residues 181 to 234 enclose the HAMP domain; sequence KNGLRPVARVTQTAASMSAGSLKERIPLEPVPDELRALITAFNSMLGRLDDSFM. The Cytoplasmic portion of the chain corresponds to 181–487; it reads KNGLRPVARV…EHETGCHCAG (307 aa). Positions 242–455 constitute a Histidine kinase domain; it reads DIAHELRTPI…LHPHLHAIAC (214 aa). A Phosphohistidine; by autocatalysis modification is found at His245.

Its subcellular location is the cell inner membrane. It catalyses the reaction ATP + protein L-histidine = ADP + protein N-phospho-L-histidine.. Its function is as follows. Member of the two-component regulatory system CopS/CopR. Involved in the activation of copper resistance gene operon copABCD. Specifically recognizes or transduces a signal only in response to copper. This would lead to phosphorylation of CopR in the cytoplasm. CopS/CopR may also regulate chromosomally encoded genes. May also be involved in basic copper metabolism. This Pseudomonas syringae pv. tomato protein is Sensor protein CopS (copS).